The sequence spans 361 residues: 3-dehydroquinate synthase (361 aa).

Residues 72–77 (SGEKEK), 130–131 (TT), Lys142, and Lys151 contribute to the NAD(+) site. 3 residues coordinate Zn(2+): Glu184, His247, and His264.

It belongs to the sugar phosphate cyclases superfamily. Dehydroquinate synthase family. The cofactor is Co(2+). Zn(2+) is required as a cofactor. NAD(+) serves as cofactor.

The protein resides in the cytoplasm. It catalyses the reaction 7-phospho-2-dehydro-3-deoxy-D-arabino-heptonate = 3-dehydroquinate + phosphate. The protein operates within metabolic intermediate biosynthesis; chorismate biosynthesis; chorismate from D-erythrose 4-phosphate and phosphoenolpyruvate: step 2/7. Catalyzes the conversion of 3-deoxy-D-arabino-heptulosonate 7-phosphate (DAHP) to dehydroquinate (DHQ). The chain is 3-dehydroquinate synthase from Bacillus cereus (strain AH820).